A 440-amino-acid chain; its full sequence is GTPase Der (440 aa).

2 EngA-type G domains span residues 3-167 (PIIA…PYDR) and 176-351 (TRIA…EQYC). GTP is bound by residues 9–16 (GRPNVGKS), 56–60 (DTGGF), 119–122 (NKVD), 182–189 (GRPNVGKS), 229–233 (DTAGI), and 294–297 (NKWD). A KH-like domain is found at 352-436 (KRVTTGELNR…PLKLIFRGRD (85 aa)).

Belongs to the TRAFAC class TrmE-Era-EngA-EngB-Septin-like GTPase superfamily. EngA (Der) GTPase family. In terms of assembly, associates with the 50S ribosomal subunit.

Functionally, GTPase that plays an essential role in the late steps of ribosome biogenesis. The protein is GTPase Der of Citrifermentans bemidjiense (strain ATCC BAA-1014 / DSM 16622 / JCM 12645 / Bem) (Geobacter bemidjiensis).